Reading from the N-terminus, the 396-residue chain is L-lactate dehydrogenase (396 aa).

In terms of domain architecture, FMN hydroxy acid dehydrogenase spans 1–380 (MIISAASDYR…SRDSLVQELG (380 aa)). Tyr24 contributes to the substrate binding site. Residues Ser106 and Gln127 each coordinate FMN. Substrate is bound at residue Tyr129. Thr155 is a binding site for FMN. Arg164 lines the substrate pocket. Residue Lys251 coordinates FMN. His275 serves as the catalytic Proton acceptor. Arg278 serves as a coordination point for substrate. Position 306-330 (306-330 (DSGIRNGLDVVRMIALGADSVLLGR)) interacts with FMN.

This sequence belongs to the FMN-dependent alpha-hydroxy acid dehydrogenase family. FMN is required as a cofactor.

It localises to the cell inner membrane. The catalysed reaction is (S)-lactate + A = pyruvate + AH2. Catalyzes the conversion of L-lactate to pyruvate. Is coupled to the respiratory chain. The polypeptide is L-lactate dehydrogenase (Citrobacter koseri (strain ATCC BAA-895 / CDC 4225-83 / SGSC4696)).